The following is a 653-amino-acid chain: Mannosyl-oligosaccharide 1,2-alpha-mannosidase IA (653 aa).

At 1–41 (MPVGGLLPLFSSPAGGVLGGGLGGGGGRKGSGPAALRLTEK) the chain is on the cytoplasmic side. Residues 42-62 (FVLLLVFSAFITLCFGAIFFL) traverse the membrane as a helical; Signal-anchor for type II membrane protein segment. Topologically, residues 63–653 (PDSSKLLSGV…DKKEVEIREE (591 aa)) are lumenal. Positions 81–116 (QPAADHKPGPGARAEDAAEGRARRREEGAPGDPEAA) are disordered. The segment covering 84-108 (ADHKPGPGARAEDAAEGRARRREEG) has biased composition (basic and acidic residues). A disulfide bridge connects residues cysteine 476 and cysteine 508. An N-linked (GlcNAc...) asparagine glycan is attached at asparagine 513. The active-site Proton donor is the glutamate 522.

It belongs to the glycosyl hydrolase 47 family. It depends on Ca(2+) as a cofactor.

It is found in the golgi apparatus membrane. It carries out the reaction N(4)-(alpha-D-Man-(1-&gt;2)-alpha-D-Man-(1-&gt;2)-alpha-D-Man-(1-&gt;3)-[alpha-D-Man-(1-&gt;2)-alpha-D-Man-(1-&gt;3)-[alpha-D-Man-(1-&gt;2)-alpha-D-Man-(1-&gt;6)]-alpha-D-Man-(1-&gt;6)]-beta-D-Man-(1-&gt;4)-beta-D-GlcNAc-(1-&gt;4)-beta-D-GlcNAc)-L-asparaginyl-[protein] (N-glucan mannose isomer 9A1,2,3B1,2,3) + 4 H2O = N(4)-(alpha-D-Man-(1-&gt;3)-[alpha-D-Man-(1-&gt;3)-[alpha-D-Man-(1-&gt;6)]-alpha-D-Man-(1-&gt;6)]-beta-D-Man-(1-&gt;4)-beta-D-GlcNAc-(1-&gt;4)-beta-D-GlcNAc)-L-asparaginyl-[protein] (N-glucan mannose isomer 5A1,2) + 4 beta-D-mannose. The enzyme catalyses N(4)-(alpha-D-Man-(1-&gt;2)-alpha-D-Man-(1-&gt;2)-alpha-D-Man-(1-&gt;3)-[alpha-D-Man-(1-&gt;3)-[alpha-D-Man-(1-&gt;2)-alpha-D-Man-(1-&gt;6)]-alpha-D-Man-(1-&gt;6)]-beta-D-Man-(1-&gt;4)-beta-D-GlcNAc-(1-&gt;4)-beta-D-GlcNAc)-L-asparaginyl-[protein] (N-glucan mannose isomer 8A1,2,3B1,3) + 3 H2O = N(4)-(alpha-D-Man-(1-&gt;3)-[alpha-D-Man-(1-&gt;3)-[alpha-D-Man-(1-&gt;6)]-alpha-D-Man-(1-&gt;6)]-beta-D-Man-(1-&gt;4)-beta-D-GlcNAc-(1-&gt;4)-beta-D-GlcNAc)-L-asparaginyl-[protein] (N-glucan mannose isomer 5A1,2) + 3 beta-D-mannose. It participates in protein modification; protein glycosylation. Inhibited by both 1-deoxymannojirimycin and kifunensine. Functionally, involved in the maturation of Asn-linked oligosaccharides. Progressively trim alpha-1,2-linked mannose residues from Man(9)GlcNAc(2) to produce Man(5)GlcNAc(2). The chain is Mannosyl-oligosaccharide 1,2-alpha-mannosidase IA (MAN1A1) from Homo sapiens (Human).